Consider the following 119-residue polypeptide: Large ribosomal subunit protein uL22c (119 aa).

It belongs to the universal ribosomal protein uL22 family. As to quaternary structure, part of the 50S ribosomal subunit.

It is found in the plastid. It localises to the chloroplast. Functionally, this protein binds specifically to 23S rRNA. Its function is as follows. The globular domain of the protein is located near the polypeptide exit tunnel on the outside of the subunit, while an extended beta-hairpin is found that lines the wall of the exit tunnel in the center of the 70S ribosome. In Spirogyra maxima (Green alga), this protein is Large ribosomal subunit protein uL22c (rpl22).